A 300-amino-acid chain; its full sequence is NAD kinase (300 aa).

Aspartate 75 (proton acceptor) is an active-site residue. NAD(+) contacts are provided by residues 75–76 (DG), 149–150 (ND), arginine 177, aspartate 179, 190–195 (TAYALS), alanine 214, and glutamine 248.

The protein belongs to the NAD kinase family. A divalent metal cation is required as a cofactor.

Its subcellular location is the cytoplasm. The enzyme catalyses NAD(+) + ATP = ADP + NADP(+) + H(+). In terms of biological role, involved in the regulation of the intracellular balance of NAD and NADP, and is a key enzyme in the biosynthesis of NADP. Catalyzes specifically the phosphorylation on 2'-hydroxyl of the adenosine moiety of NAD to yield NADP. This chain is NAD kinase, found in Burkholderia lata (strain ATCC 17760 / DSM 23089 / LMG 22485 / NCIMB 9086 / R18194 / 383).